The chain runs to 692 residues: Protein artemis (692 aa).

The residue at position 380 (threonine 380) is a Phosphothreonine. Serine 385 carries the post-translational modification Phosphoserine. Disordered stretches follow at residues 503-555 (RLEN…DSQS) and 640-660 (STNADSQSSSDFEVPSTPEAE). Residues 507-520 (FPSSTEAGGSQSPK) are compositionally biased toward polar residues. Low complexity predominate over residues 530–543 (THISSQNSSQSTHI). 2 stretches are compositionally biased toward polar residues: residues 544–555 (TEQGSQGWDSQS) and 640–650 (STNADSQSSSD). Position 645 is a phosphoserine; by ATM (serine 645).

This sequence belongs to the DNA repair metallo-beta-lactamase (DRMBL) family. As to quaternary structure, interacts with LIG4; the interaction is direct. Interacts with ATM. Interacts with BRCA1. Interacts with PRKDC. Interacts with TP53BP1. Also exhibits ATM- and phosphorylation-dependent interaction with the MRN complex, composed of MRE11, RAD50, and NBN. In terms of processing, phosphorylation on undefined residues by PRKDC may stimulate endonucleolytic activity on 5' and 3' hairpins and overhangs. PRKDC must remain present, even after phosphorylation, for efficient hairpin opening. Also phosphorylated by ATM in response to ionizing radiation (IR) and by ATR in response to ultraviolet (UV) radiation.

It localises to the nucleus. Functionally, required for V(D)J recombination, the process by which exons encoding the antigen-binding domains of immunoglobulins and T-cell receptor proteins are assembled from individual V, (D), and J gene segments. V(D)J recombination is initiated by the lymphoid specific RAG endonuclease complex, which generates site specific DNA double strand breaks (DSBs). These DSBs present two types of DNA end structures: hairpin sealed coding ends and phosphorylated blunt signal ends. These ends are independently repaired by the non homologous end joining (NHEJ) pathway to form coding and signal joints respectively. This protein exhibits single-strand specific 5'-3' exonuclease activity in isolation, and acquires endonucleolytic activity on 5' and 3' hairpins and overhangs when in a complex with PRKDC. The latter activity is required specifically for the resolution of closed hairpins prior to the formation of the coding joint. May also be required for the repair of complex DSBs induced by ionizing radiation, which require substantial end-processing prior to religation by NHEJ. In Pongo abelii (Sumatran orangutan), this protein is Protein artemis (DCLRE1C).